A 94-amino-acid chain; its full sequence is Large ribosomal subunit protein bL25 (94 aa).

This sequence belongs to the bacterial ribosomal protein bL25 family. In terms of assembly, part of the 50S ribosomal subunit; part of the 5S rRNA/L5/L18/L25 subcomplex. Contacts the 5S rRNA. Binds to the 5S rRNA independently of L5 and L18.

In terms of biological role, this is one of the proteins that binds to the 5S RNA in the ribosome where it forms part of the central protuberance. In Serratia proteamaculans (strain 568), this protein is Large ribosomal subunit protein bL25.